A 171-amino-acid polypeptide reads, in one-letter code: Interleukin-26 (171 aa).

Residues 1-21 (MLVNFILRCGLLLVTLSLAIA) form the signal peptide.

Belongs to the IL-10 family. Homodimer. In terms of tissue distribution, expressed in HVS transformed T-cells but not other T-cell lines or primary stimulated T-cells. Expressed in colonic T-cells including Th17 inflammatory T-cells; the expression is significantly increased in serum of patients with Crohn's disease (at protein level).

It localises to the secreted. May play a role in local mechanisms of mucosal immunity and seems to have a pro-inflammatory function. May play a role in inflammatory bowel disease. Activates STAT1 and STAT3, MAPK1/3 (ERK1/2), JUN and AKT. Induces expression of SOCS3, TNF-alpha and IL-8, secretion of IL-8 and IL-10 and surface expression of ICAM1. Decreases proliferation of intestinal epithelial cells. Is inhibited by heparin. This chain is Interleukin-26 (IL26), found in Homo sapiens (Human).